A 545-amino-acid chain; its full sequence is MEGTGEMREVGRETLHGGVVQSVSETDEYKEKTIDSEKDGQFRVQPRWRKFLAHVGPGALVAIGFLDPSNLETDMQAGADFKYELLWVILVGMVFALLIQTLAANLGVKTGRHLAELCREEYPHYVNIFLWIIAELAVISDDIPEVLGTAFAFNILLKIPVWAGVILTVFSTLLLLGVQRFGARKLEFIIAAFMFTMAACFFGELSYLRPSAGEVVKGMFVPSLQGKGAAANAIALFGAIITPYNLFLHSALVLSRKTPRSDKSIRAACRYFLIECSLAFIVAFLINVSVVVVAGSICNANNLSPADANTCGDLTLQSTPLLLRNVLGRSSSVVYAVALLASGQSTTISCTFAGQVIMQGFLDMKMKNWVRNLITRVIAIAPSLIVSIVSGPSGAGKLIILSSMILSFELPFALIPLLKFCNSSKKVGPLKESIYTVVIAWILSFALIVVNTYFLVWTYVDWLVHNNLPKYANGLISVVVFALMAAYLVAVVYLTFRKDTVATYVPVPERAQAQVEAGGTPVVDASAADEDQPAPYRKDLADASM.

12 consecutive transmembrane segments (helical) span residues 51-71, 84-104, 128-148, 155-175, 188-208, 234-254, 278-298, 333-353, 373-395, 398-418, 437-457, and 474-494; these read FLAHVGPGALVAIGFLDPSNL, ELLWVILVGMVFALLIQTLAA, IFLWIIAELAVISDDIPEVLG, ILLKIPVWAGVILTVFSTLLL, FIIAAFMFTMAACFFGELSYL, IALFGAIITPYNLFLHSALVL, LAFIVAFLINVSVVVVAGSIC, VVYAVALLASGQSTTISCTFA, LITRVIAIAPSLIVSIVSGPSGA, LIILSSMILSFELPFALIPLL, VVIAWILSFALIVVNTYFLVW, and GLISVVVFALMAAYLVAVVYL. The tract at residues 516-545 is disordered; it reads EAGGTPVVDASAADEDQPAPYRKDLADASM. Residues 536 to 545 are compositionally biased toward basic and acidic residues; sequence YRKDLADASM.

It belongs to the NRAMP (TC 2.A.55) family. Expressed at low levels in roots.

The protein resides in the cell membrane. In terms of biological role, metal transporter that transports the trivalent cation aluminum (Al(3+)), but does not seem to transport divalent cations such as iron (Fe(2+)), manganese (Mg(2+)) or Cadmium (Cd(2+)). Involved in Al tolerance by taking up Al in root cells, where it is detoxified by chelation with organic acid anions and sequestration into the vacuoles. In Oryza sativa subsp. japonica (Rice), this protein is Metal transporter NRAT1 (NRAT1).